The sequence spans 551 residues: Nicotianamine aminotransferase B (551 aa).

Residues Lys-24–Glu-127 form a disordered region. Over residues Gly-86–Ala-96 the composition is skewed to basic and acidic residues. Residues Ala-111 to Ala-123 are compositionally biased toward low complexity. N6-(pyridoxal phosphate)lysine is present on Lys-379.

The protein belongs to the class-I pyridoxal-phosphate-dependent aminotransferase family. Pyridoxal 5'-phosphate is required as a cofactor. In terms of tissue distribution, expressed in roots, but not in leaves.

It carries out the reaction nicotianamine + 2-oxoglutarate = 3''-deamino-3''-oxonicotianamine + L-glutamate. Involved in biosynthesis of mugineic acid family phytosiderophores. The chain is Nicotianamine aminotransferase B from Hordeum vulgare (Barley).